Reading from the N-terminus, the 167-residue chain is MEVEVGQIVNTHGIKGEVKVKSNSDFTETRFQPGEQLLVKHNNTEIVYTVDSYRIHKGFHMLRFEGINNINDIEHLKGDYIYQERDHQDIELGEHEYYYSDIIGCTVFKDDDTPIGRVINIFETGANDVWIVKGEKEYLIPYIEDVVKDIDIENKTIKITPMEGLLD.

Residues 94-165 form the PRC barrel domain; that stretch reads EHEYYYSDII…TIKITPMEGL (72 aa).

This sequence belongs to the RimM family. In terms of assembly, binds ribosomal protein uS19.

The protein resides in the cytoplasm. An accessory protein needed during the final step in the assembly of 30S ribosomal subunit, possibly for assembly of the head region. Essential for efficient processing of 16S rRNA. May be needed both before and after RbfA during the maturation of 16S rRNA. It has affinity for free ribosomal 30S subunits but not for 70S ribosomes. The polypeptide is Ribosome maturation factor RimM (Staphylococcus epidermidis (strain ATCC 35984 / DSM 28319 / BCRC 17069 / CCUG 31568 / BM 3577 / RP62A)).